A 208-amino-acid polypeptide reads, in one-letter code: Ribosomal RNA large subunit methyltransferase E (208 aa).

S-adenosyl-L-methionine is bound by residues Gly63, Trp65, Asp83, Asp99, and Asp124. Catalysis depends on Lys164, which acts as the Proton acceptor.

The protein belongs to the class I-like SAM-binding methyltransferase superfamily. RNA methyltransferase RlmE family.

Its subcellular location is the cytoplasm. The enzyme catalyses uridine(2552) in 23S rRNA + S-adenosyl-L-methionine = 2'-O-methyluridine(2552) in 23S rRNA + S-adenosyl-L-homocysteine + H(+). In terms of biological role, specifically methylates the uridine in position 2552 of 23S rRNA at the 2'-O position of the ribose in the fully assembled 50S ribosomal subunit. The sequence is that of Ribosomal RNA large subunit methyltransferase E from Salmonella agona (strain SL483).